The chain runs to 307 residues: Pantothenate kinase (307 aa).

Residue 87–94 coordinates ATP; the sequence is GSVAVGKS.

The protein belongs to the prokaryotic pantothenate kinase family.

The protein localises to the cytoplasm. It catalyses the reaction (R)-pantothenate + ATP = (R)-4'-phosphopantothenate + ADP + H(+). It participates in cofactor biosynthesis; coenzyme A biosynthesis; CoA from (R)-pantothenate: step 1/5. This Vibrio vulnificus (strain CMCP6) protein is Pantothenate kinase.